The following is a 220-amino-acid chain: MCGGDVQGQGVASGCDEALERADSLRASDPVPVESGEGSVPGEHSQELETGASEETLRERVNVLQEQYLRKAADLENYRKRALRERQEAVEHAYAALLADIVAVLDDFDRAIEAADHASSTEVEASSAFREGVLMIRKQLSSVLETKYGLEYYPVLGERFDPNLHEALSMSPSASVHEKIVGAELQKGYRVRNRILRHAKVMVLTPEEQTEPDRGDGPSE.

Positions 1-55 (MCGGDVQGQGVASGCDEALERADSLRASDPVPVESGEGSVPGEHSQELETGASEE) are disordered.

The protein belongs to the GrpE family. In terms of assembly, homodimer.

It localises to the cytoplasm. Functionally, participates actively in the response to hyperosmotic and heat shock by preventing the aggregation of stress-denatured proteins, in association with DnaK and GrpE. It is the nucleotide exchange factor for DnaK and may function as a thermosensor. Unfolded proteins bind initially to DnaJ; upon interaction with the DnaJ-bound protein, DnaK hydrolyzes its bound ATP, resulting in the formation of a stable complex. GrpE releases ADP from DnaK; ATP binding to DnaK triggers the release of the substrate protein, thus completing the reaction cycle. Several rounds of ATP-dependent interactions between DnaJ, DnaK and GrpE are required for fully efficient folding. The chain is Protein GrpE from Treponema pallidum (strain Nichols).